The chain runs to 178 residues: Cytidylate kinase (178 aa).

7-15 serves as a coordination point for ATP; sequence GLPGTGTTT.

The protein belongs to the cytidylate kinase family. Type 2 subfamily.

The protein resides in the cytoplasm. It carries out the reaction CMP + ATP = CDP + ADP. It catalyses the reaction dCMP + ATP = dCDP + ADP. The protein is Cytidylate kinase of Methanococcus maripaludis (strain C5 / ATCC BAA-1333).